The following is a 535-amino-acid chain: MHRRDLLKQLAAGFLALAPGLTPSTASAVSPASAATEPFDEAWLRRRARALAAGPYRKRNTALPPPLAALGWDAYQSIGARADHALWAGQSLPFDARFFHLGLFFKSPVRMHEVAGGQSRVIAYDPAMFDYGKSGLDHAALPADLGFAGFRLTTRADPTRDVAAFLGASYFRAVGGQWQYGMSARGLAIDTGLRRAEEFPDFTEFWLVRPAPEADTLRVYALLDAPSVAGAYRFDIRPGDTLVMDVQATLFVRKPIERLGIAPLTSMFLYGENDRTDRAGDRQSAARRWRASDWRPEIHDSDGLAIWRGSGEWIWRPLANPPALRSQRFADDGPRGFGLLQRDRNPDHYQDDGVFYEKRPSVWVEPAHGWGEGAVELVELSAADETFDNIVAFWRPAVAPQAGQELAFGYRLSWGAQPPVAPPLARVVATRTGIGGIVGQPRRHFSWRFVIDFAGGELGQPGRAAVEPVIRVSRGRVEIVSARPLANIDGVRAMFDLVPDAGNAPIELQLTLQSGDRPLSETWAYQWTPPADRAV.

The tat-type signal signal peptide spans 1–28 (MHRRDLLKQLAAGFLALAPGLTPSTASA). The interval 275 to 287 (RTDRAGDRQSAAR) is insert.

This sequence belongs to the OpgD/OpgG family. In terms of processing, predicted to be exported by the Tat system. The position of the signal peptide cleavage has not been experimentally proven.

The protein localises to the periplasm. It functions in the pathway glycan metabolism; osmoregulated periplasmic glucan (OPG) biosynthesis. Functionally, probably involved in the control of the structural glucose backbone of osmoregulated periplasmic glucans (OPGs). This chain is Glucans biosynthesis protein D 1 (opgD1), found in Ralstonia nicotianae (strain ATCC BAA-1114 / GMI1000) (Ralstonia solanacearum).